The primary structure comprises 622 residues: Chaperone protein HscA homolog (622 aa).

It belongs to the heat shock protein 70 family.

Functionally, chaperone involved in the maturation of iron-sulfur cluster-containing proteins. Has a low intrinsic ATPase activity which is markedly stimulated by HscB. This is Chaperone protein HscA homolog from Verminephrobacter eiseniae (strain EF01-2).